A 942-amino-acid polypeptide reads, in one-letter code: Protein FAM184B (942 aa).

Disordered stretches follow at residues 1 to 26 (MASA…RGGS) and 73 to 97 (QEDL…TSED). Coiled-coil stretches lie at residues 89 to 150 (QEQS…RVLI), 196 to 337 (EMHQ…DRLM), and 387 to 495 (SETQ…SLLE). Residues 486–542 (STKLQNSLLEDPCSRPKKPARDEGLEKLTDEEESSSDEEERTGESVKGKSDLQPPFE) form a disordered region. A compositionally biased stretch (basic and acidic residues) spans 504–513 (PARDEGLEKL). The span at 514–526 (TDEEESSSDEEER) shows a compositional bias: acidic residues. Coiled-coil stretches lie at residues 575-619 (NKDS…ESLR) and 686-815 (EKGL…ERRF). Residues 880–934 (APPITKSPSLDPSPSCSQPYKPTQLLDGKTASRTQDGEPAQPKEAPQKQGSPHQE) are disordered. Positions 885 to 900 (KSPSLDPSPSCSQPYK) are enriched in polar residues.

Belongs to the FAM184 family.

The protein is Protein FAM184B (Fam184b) of Mus musculus (Mouse).